Reading from the N-terminus, the 464-residue chain is UDP-N-acetylmuramate--L-alanine ligase (464 aa).

118–124 (GTHGKTT) serves as a coordination point for ATP.

The protein belongs to the MurCDEF family.

The protein localises to the cytoplasm. The catalysed reaction is UDP-N-acetyl-alpha-D-muramate + L-alanine + ATP = UDP-N-acetyl-alpha-D-muramoyl-L-alanine + ADP + phosphate + H(+). Its pathway is cell wall biogenesis; peptidoglycan biosynthesis. In terms of biological role, cell wall formation. This chain is UDP-N-acetylmuramate--L-alanine ligase, found in Dinoroseobacter shibae (strain DSM 16493 / NCIMB 14021 / DFL 12).